A 578-amino-acid chain; its full sequence is Probable methylcrotonoyl-CoA carboxylase beta chain, mitochondrial (578 aa).

A mitochondrion-targeting transit peptide spans 1 to 29; the sequence is MIRLNWLFRSSSVLLRSQVRLLHVGDANV. A CoA carboxyltransferase N-terminal domain is found at 48–305; sequence MASLVGDLRN…SATNSYNDQL (258 aa). Residues 48-570 form a carboxyltransferase region; the sequence is MASLVGDLRN…KAALNNAGQE (523 aa). Residues 321 to 570 form the CoA carboxyltransferase C-terminal domain; the sequence is AVEEPRYDAE…KAALNNAGQE (250 aa). Positions 355–388 are acyl-CoA binding; that stretch reads DGSRFTEFKKLYGETLVCGFAKLYGHTVGIVGNN.

Belongs to the AccD/PCCB family. As to expression, expressed in third instar larval ring gland (lateral and medial secretory cells and corpus cardiacum cells) and CNS.

It localises to the mitochondrion matrix. It catalyses the reaction 3-methylbut-2-enoyl-CoA + hydrogencarbonate + ATP = 3-methyl-(2E)-glutaconyl-CoA + ADP + phosphate + H(+). It functions in the pathway amino-acid degradation; L-leucine degradation; (S)-3-hydroxy-3-methylglutaryl-CoA from 3-isovaleryl-CoA: step 2/3. Its function is as follows. Carboxyltransferase subunit of the 3-methylcrotonyl-CoA carboxylase, an enzyme that catalyzes the conversion of 3-methylcrotonyl-CoA to 3-methylglutaconyl-CoA, a critical step for leucine and isovaleric acid catabolism. Vital for adult survival. This chain is Probable methylcrotonoyl-CoA carboxylase beta chain, mitochondrial, found in Drosophila melanogaster (Fruit fly).